The primary structure comprises 302 residues: Protein FdhE homolog (302 aa).

The protein belongs to the FdhE family.

The protein resides in the cytoplasm. Necessary for formate dehydrogenase activity. The polypeptide is Protein FdhE homolog (Shewanella oneidensis (strain ATCC 700550 / JCM 31522 / CIP 106686 / LMG 19005 / NCIMB 14063 / MR-1)).